Here is a 513-residue protein sequence, read N- to C-terminus: ATP synthase subunit alpha 2 (513 aa).

Residue glycine 152–threonine 159 coordinates ATP.

This sequence belongs to the ATPase alpha/beta chains family. F-type ATPases have 2 components, CF(1) - the catalytic core - and CF(0) - the membrane proton channel. CF(1) has five subunits: alpha(3), beta(3), gamma(1), delta(1), epsilon(1). CF(0) has three main subunits: a(1), b(2) and c(9-12). The alpha and beta chains form an alternating ring which encloses part of the gamma chain. CF(1) is attached to CF(0) by a central stalk formed by the gamma and epsilon chains, while a peripheral stalk is formed by the delta and b chains.

Its subcellular location is the cell membrane. The catalysed reaction is ATP + H2O + 4 H(+)(in) = ADP + phosphate + 5 H(+)(out). Its function is as follows. Produces ATP from ADP in the presence of a proton gradient across the membrane. The alpha chain is a regulatory subunit. The chain is ATP synthase subunit alpha 2 from Mycoplasmopsis pulmonis (strain UAB CTIP) (Mycoplasma pulmonis).